Here is a 396-residue protein sequence, read N- to C-terminus: Period circadian protein (396 aa).

Disordered stretches follow at residues 27–120 (VTAP…APPV), 164–188 (LEYSGPGPGHGHGIKRGGSHSWEGE), 253–273 (GGNGNVGSGNGNNNQPSTNQY), and 333–362 (SPSSTNTNPNRPHKHAHVHNSSEKPSTSQA). The segment covering 93-114 (GTSGTGNSGDGGGGGGANGTGS) has biased composition (gly residues). Over residues 253-262 (GGNGNVGSGN) the composition is skewed to gly residues. A compositionally biased stretch (low complexity) spans 333-342 (SPSSTNTNPN).

In terms of assembly, forms a heterodimer with timeless (TIM); the complex then translocates into the nucleus. In terms of processing, phosphorylated with a circadian rhythmicity, probably by the double-time protein (dbt). Phosphorylation could be implicated in the stability of per monomer and in the formation of heterodimer per-tim.

It localises to the nucleus. Its subcellular location is the cytoplasm. It is found in the perinuclear region. Its function is as follows. Essential for biological clock functions. Determines the period length of circadian and ultradian rhythms; an increase in PER dosage leads to shortened circadian rhythms and a decrease leads to lengthened circadian rhythms. Essential for the circadian rhythmicity of locomotor activity, eclosion behavior, and for the rhythmic component of the male courtship song that originates in the thoracic nervous system. The biological cycle depends on the rhythmic formation and nuclear localization of the TIM-PER complex. Light induces the degradation of TIM, which promotes elimination of PER. Nuclear activity of the heterodimer coordinatively regulates PER and TIM transcription through a negative feedback loop. Behaves as a negative element in circadian transcriptional loop. Does not appear to bind DNA, suggesting indirect transcriptional inhibition. This chain is Period circadian protein (per), found in Drosophila pavlovskiana (Fruit fly).